Here is a 211-residue protein sequence, read N- to C-terminus: Potassium-transporting ATPase KdpC subunit (211 aa).

Residues 13 to 35 traverse the membrane as a helical segment; sequence VVTMVLTGLLYPLAVTGLAQLLF.

This sequence belongs to the KdpC family. The system is composed of three essential subunits: KdpA, KdpB and KdpC.

Its subcellular location is the cell membrane. Functionally, part of the high-affinity ATP-driven potassium transport (or Kdp) system, which catalyzes the hydrolysis of ATP coupled with the electrogenic transport of potassium into the cytoplasm. This subunit acts as a catalytic chaperone that increases the ATP-binding affinity of the ATP-hydrolyzing subunit KdpB by the formation of a transient KdpB/KdpC/ATP ternary complex. This Myxococcus xanthus protein is Potassium-transporting ATPase KdpC subunit.